The following is a 292-amino-acid chain: Protease HtpX (292 aa).

The next 2 helical transmembrane spans lie at 5 to 25 (IFLF…VMSV) and 34 to 54 (SGLL…SLLL). Zn(2+) is bound at residue His-140. The active site involves Glu-141. A Zn(2+)-binding site is contributed by His-144. 2 helical membrane passes run 155 to 175 (LLQG…GGII) and 193 to 213 (IIVF…AMWF). Glu-218 is a Zn(2+) binding site.

This sequence belongs to the peptidase M48B family. It depends on Zn(2+) as a cofactor.

It is found in the cell inner membrane. The protein is Protease HtpX of Xanthomonas oryzae pv. oryzae (strain PXO99A).